We begin with the raw amino-acid sequence, 586 residues long: Phosphomethylpyrimidine synthase (586 aa).

Residues M1–G58 are disordered. Basic and acidic residues predominate over residues V22–E39. Substrate contacts are provided by residues N193, M222, Y251, H287, S307–G309, D348–R351, and E387. H391 contacts Zn(2+). Residue Y414 coordinates substrate. H455 lines the Zn(2+) pocket. C535, C538, and C543 together coordinate [4Fe-4S] cluster.

The protein belongs to the ThiC family. Requires [4Fe-4S] cluster as cofactor.

The catalysed reaction is 5-amino-1-(5-phospho-beta-D-ribosyl)imidazole + S-adenosyl-L-methionine = 4-amino-2-methyl-5-(phosphooxymethyl)pyrimidine + CO + 5'-deoxyadenosine + formate + L-methionine + 3 H(+). The protein operates within cofactor biosynthesis; thiamine diphosphate biosynthesis. Catalyzes the synthesis of the hydroxymethylpyrimidine phosphate (HMP-P) moiety of thiamine from aminoimidazole ribotide (AIR) in a radical S-adenosyl-L-methionine (SAM)-dependent reaction. The protein is Phosphomethylpyrimidine synthase of Bacillus thuringiensis (strain Al Hakam).